A 1081-amino-acid chain; its full sequence is SPX and EXS domain-containing protein 4 (1081 aa).

The SPX domain occupies 1–483 (MKFRDLLNDH…RIISSECRKY (483 aa)). 3 disordered regions span residues 86 to 118 (ETADSPAIPSPIISHSNINSNNNNNGGTNSVGF), 160 to 271 (QRNN…HDKN), and 318 to 354 (VKGDKSNDKNNDKSNDKNNNKNNKNNNNNNNLNDEDN). Low complexity-rich tracts occupy residues 90–110 (SPAIPSPIISHSNINSNNNNN), 161–196 (RNNNNNINNINNNNNNNSNNSNNSNNNKTIKNTRNI), and 211–228 (SPFSSPSIGSPPMSSPSP). The segment covering 244-264 (KDEDEEEEGEEEEDIEMEQLE) has biased composition (acidic residues). Residues 319–336 (KGDKSNDKNNDKSNDKNN) are compositionally biased toward basic and acidic residues. Residues 337–349 (NKNNKNNNNNNNL) show a composition bias toward low complexity. 9 helical membrane passes run 536–556 (NLFTIGLLIGVCIVLGIQVVF), 573–593 (LAWLLFRISLLPILLGTMFSL), 622–642 (YLKYGLIFNTLWLLALNLYID), 654–674 (ILIPIVFVLITLIIGIQPFPI), 703–723 (FFMSVQLLSLGEFLFNIQSMV), 776–796 (ITSAIRSIFSIIALVLNYIAL), 803–823 (WSIIKIAWFGINVVGSFYKFY), 854–874 (WIYYVAITLDFFLRFTWLIIF), and 887–907 (PLFLFFFSLTEVVWATQFIFF). The 203-residue stretch at 738 to 940 (FCSQSRFFAL…SQEYNNYMDE (203 aa)) folds into the EXS domain. The segment at 939–1031 (DEKKKRRKRK…INDHMNPDTG (93 aa)) is disordered. A compositionally biased stretch (basic residues) spans 942 to 951 (KKRRKRKQKQ). Residues 952 to 970 (SKSNNNNNNNNNNNNNNNN) are compositionally biased toward low complexity. Polar residues predominate over residues 977 to 1003 (SSNNVETDETITSSNNTDSSHQKQPLT). The span at 1013 to 1022 (NHQDHHDLSI) shows a compositional bias: basic and acidic residues.

The protein belongs to the SYG1 (TC 2.A.94) family.

Its subcellular location is the membrane. This chain is SPX and EXS domain-containing protein 4, found in Dictyostelium discoideum (Social amoeba).